The following is a 188-amino-acid chain: Surfactant protein C (188 aa).

Positions 1–23 (MDMGSKEALMESPPDYSAAPRGR) are excised as a propeptide. 2 S-palmitoyl cysteine lipidation sites follow: Cys-28 and Cys-29. A propeptide spanning residues 59–188 (HMSQKHTEMV…LCGEVPLIYI (130 aa)) is cleaved from the precursor. One can recognise a BRICHOS domain in the interval 94–188 (FPIGSTGIVT…LCGEVPLIYI (95 aa)). The cysteines at positions 121 and 180 are disulfide-linked. The tract at residues 144-164 (NPAEPPTQRGQDKGPAAGPAS) is disordered.

The protein localises to the secreted. Its subcellular location is the extracellular space. It is found in the surface film. Its function is as follows. Pulmonary surfactant associated proteins promote alveolar stability by lowering the surface tension at the air-liquid interface in the peripheral air spaces. The protein is Surfactant protein C (SFTPC) of Oryctolagus cuniculus (Rabbit).